A 635-amino-acid polypeptide reads, in one-letter code: Threonine--tRNA ligase (635 aa).

The TGS domain maps to 1–58 (MIRVICNNETVELPKGATAADFASKIKNSHYFAGVVINDQIKDLSTTLNEGDTLRFVT). Residues 237–528 (DHRVLGAKLD…LIEHFKGKFP (292 aa)) are catalytic. Residues cysteine 328, histidine 379, and histidine 505 each coordinate Zn(2+).

This sequence belongs to the class-II aminoacyl-tRNA synthetase family. In terms of assembly, homodimer. Zn(2+) is required as a cofactor.

The protein resides in the cytoplasm. The catalysed reaction is tRNA(Thr) + L-threonine + ATP = L-threonyl-tRNA(Thr) + AMP + diphosphate + H(+). In terms of biological role, catalyzes the attachment of threonine to tRNA(Thr) in a two-step reaction: L-threonine is first activated by ATP to form Thr-AMP and then transferred to the acceptor end of tRNA(Thr). Also edits incorrectly charged L-seryl-tRNA(Thr). The chain is Threonine--tRNA ligase from Chlamydia caviae (strain ATCC VR-813 / DSM 19441 / 03DC25 / GPIC) (Chlamydophila caviae).